We begin with the raw amino-acid sequence, 447 residues long: Adenylosuccinate synthetase (447 aa).

GTP is bound by residues 12–18 (GDEGKGK) and 40–42 (GHT). Residue Asp-13 is the Proton acceptor of the active site. Mg(2+)-binding residues include Asp-13 and Gly-40. IMP is bound by residues 13 to 16 (DEGK), 38 to 41 (NAGH), Thr-128, Arg-142, Gln-223, Thr-238, and Arg-302. Catalysis depends on His-41, which acts as the Proton donor. Residue 298–304 (TTTGRRR) participates in substrate binding. Residues Arg-304, 330–332 (KLD), and 412–414 (SLG) contribute to the GTP site.

Belongs to the adenylosuccinate synthetase family. In terms of assembly, homodimer. Mg(2+) is required as a cofactor.

Its subcellular location is the cytoplasm. The catalysed reaction is IMP + L-aspartate + GTP = N(6)-(1,2-dicarboxyethyl)-AMP + GDP + phosphate + 2 H(+). Its pathway is purine metabolism; AMP biosynthesis via de novo pathway; AMP from IMP: step 1/2. Its function is as follows. Plays an important role in the de novo pathway of purine nucleotide biosynthesis. Catalyzes the first committed step in the biosynthesis of AMP from IMP. The sequence is that of Adenylosuccinate synthetase from Microcystis aeruginosa (strain NIES-843 / IAM M-2473).